The chain runs to 487 residues: L-tartrate/succinate antiporter (487 aa).

A run of 14 helical transmembrane segments spans residues 10 to 30, 33 to 53, 54 to 74, 93 to 113, 137 to 157, 189 to 209, 236 to 256, 292 to 312, 313 to 333, 340 to 360, 370 to 390, 393 to 413, 418 to 438, and 465 to 485; these read YLAP…AGLE, TWLY…EPVP, GAVV…WLLF, WAVS…FMFG, TLFL…VTPS, IGSY…AIFL, FLGM…LAYV, LIVG…AAMV, GYSV…DIVS, VFFW…TGFI, SLSG…FYLL, FFAS…AAAL, IPLP…SILT, and IFGL…MPVV.

It belongs to the SLC13A/DASS transporter (TC 2.A.47) family. DIT1 subfamily.

The protein localises to the cell inner membrane. The catalysed reaction is (2R,3R)-tartrate(out) + succinate(in) = (2R,3R)-tartrate(in) + succinate(out). In terms of biological role, catalyzes the uptake of tartrate in exchange for intracellular succinate. Essential for anaerobic L-tartrate fermentation. This is L-tartrate/succinate antiporter (ttdT) from Shigella sonnei (strain Ss046).